The following is a 449-amino-acid chain: Tol-Pal system protein TolB (449 aa).

A signal peptide spans 1-36; the sequence is MDCPNMPLHINRRQMLLSAATAAGALALGPARDAFG.

This sequence belongs to the TolB family. As to quaternary structure, the Tol-Pal system is composed of five core proteins: the inner membrane proteins TolA, TolQ and TolR, the periplasmic protein TolB and the outer membrane protein Pal. They form a network linking the inner and outer membranes and the peptidoglycan layer.

It localises to the periplasm. Functionally, part of the Tol-Pal system, which plays a role in outer membrane invagination during cell division and is important for maintaining outer membrane integrity. This Rhodopseudomonas palustris (strain HaA2) protein is Tol-Pal system protein TolB.